The following is a 336-amino-acid chain: Fimbrial adhesin PapGII (336 aa).

Positions 1-20 are cleaved as a signal peptide; the sequence is MKKWFPALLFSLCVSGESSA. 2 disulfides stabilise this stretch: cysteine 64-cysteine 138 and cysteine 217-cysteine 249. D-galactose is bound by residues glutamate 79 and 124 to 127; that span reads GYKW.

This sequence belongs to the adhesin PapG family.

The protein localises to the secreted. Its subcellular location is the fimbrium. In terms of biological role, tip adhesin component of type P pili that plays a critical role in kidney infection through targeted interaction with the globoseries glycolipids containing the Gal-alpha(1-4)-Gal disaccharide present on uroepithelial cells. In turn, transcriptionally regulates host gene expression in kidney cells, leading to inflammatory pathway activation and renal tissue damage. Acts thereby as key determinant of invasive uropathogenic E.coli (UPEC), which cause pyelonephritis and urinary-source bacteremia. In Escherichia coli O6:H1 (strain CFT073 / ATCC 700928 / UPEC), this protein is Fimbrial adhesin PapGII.